The chain runs to 257 residues: Phosphonates import ATP-binding protein PhnC (257 aa).

The 245-residue stretch at 2 to 246 folds into the ABC transporter domain; it reads IEFRNVSKVY…KFAEIYGDVA (245 aa). 35 to 42 contacts ATP; the sequence is GLSGAGKS.

It belongs to the ABC transporter superfamily. Phosphonates importer (TC 3.A.1.9.1) family. In terms of assembly, the complex is composed of two ATP-binding proteins (PhnC), two transmembrane proteins (PhnE) and a solute-binding protein (PhnD).

It is found in the cell membrane. It catalyses the reaction phosphonate(out) + ATP + H2O = phosphonate(in) + ADP + phosphate + H(+). Its function is as follows. Part of the ABC transporter complex PhnCDE involved in phosphonates import. Responsible for energy coupling to the transport system. The polypeptide is Phosphonates import ATP-binding protein PhnC (Bacillus cereus (strain ATCC 14579 / DSM 31 / CCUG 7414 / JCM 2152 / NBRC 15305 / NCIMB 9373 / NCTC 2599 / NRRL B-3711)).